The primary structure comprises 370 residues: 4-hydroxy-3-methylbut-2-en-1-yl diphosphate synthase (flavodoxin) (370 aa).

4 residues coordinate [4Fe-4S] cluster: cysteine 268, cysteine 271, cysteine 303, and glutamate 310.

This sequence belongs to the IspG family. It depends on [4Fe-4S] cluster as a cofactor.

The enzyme catalyses (2E)-4-hydroxy-3-methylbut-2-enyl diphosphate + oxidized [flavodoxin] + H2O + 2 H(+) = 2-C-methyl-D-erythritol 2,4-cyclic diphosphate + reduced [flavodoxin]. Its pathway is isoprenoid biosynthesis; isopentenyl diphosphate biosynthesis via DXP pathway; isopentenyl diphosphate from 1-deoxy-D-xylulose 5-phosphate: step 5/6. Its function is as follows. Converts 2C-methyl-D-erythritol 2,4-cyclodiphosphate (ME-2,4cPP) into 1-hydroxy-2-methyl-2-(E)-butenyl 4-diphosphate. The polypeptide is 4-hydroxy-3-methylbut-2-en-1-yl diphosphate synthase (flavodoxin) (Bacillus cereus (strain B4264)).